Consider the following 587-residue polypeptide: Protein POF1B (587 aa).

The stretch at 331-529 (STFSNIREEL…EELSKLRQEI (199 aa)) forms a coiled coil.

In terms of assembly, interacts with nonmuscle actin. As to expression, expression absent in adult ovary.

The protein resides in the cell junction. The protein localises to the tight junction. Functionally, plays a key role in the organization of epithelial monolayers by regulating the actin cytoskeleton. May be involved in ovary development. The chain is Protein POF1B (Pof1b) from Mus musculus (Mouse).